We begin with the raw amino-acid sequence, 423 residues long: MNAPLASGRPDIQSADGIWHCCHLLPDADPDRAVRDAALVVEQGRIAWLGAEAELPADYRSLPRHDAGGTWMTPGLVDCHTHLVYGGQRADEFAMRLAGASYEEIARAGGGIVSSVRATRAADEDTLFSQAAARLAPLLAEGVTAIEIKSGYGLELEAERRQLRVARRLGEAFGVSVHTTFLGAHALPPEYAGRADDYIDLVCNTMLPALAEEGLVDAVDAFCESVGFSLAQTERVFEAAARHGLRVKLHAEQLSNLGGAALAARHHALSADHLEHLDEAGVEAMAAAGTVAVLLPGAYYFLRDTNLPPIALLRKHGVPIAISTDHNPGTSPVTSLLLMMNMACTLFRLTVPEALAGVTTHAARALGAPDRHGKLAVGRAADFVLWRVESPAELAYWFGRNPAAVVVRQGRIHPATSQHGGRA.

Residues H80 and H82 each contribute to the Fe(3+) site. Residues H80 and H82 each coordinate Zn(2+). The 4-imidazolone-5-propanoate site is built by R89, Y152, and H185. Residue Y152 participates in N-formimidoyl-L-glutamate binding. H250 serves as a coordination point for Fe(3+). H250 provides a ligand contact to Zn(2+). Q253 provides a ligand contact to 4-imidazolone-5-propanoate. D325 serves as a coordination point for Fe(3+). D325 is a Zn(2+) binding site. N-formimidoyl-L-glutamate is bound by residues N327 and G329. T330 is a 4-imidazolone-5-propanoate binding site.

It belongs to the metallo-dependent hydrolases superfamily. HutI family. Requires Zn(2+) as cofactor. Fe(3+) serves as cofactor.

It is found in the cytoplasm. It catalyses the reaction 4-imidazolone-5-propanoate + H2O = N-formimidoyl-L-glutamate. Its pathway is amino-acid degradation; L-histidine degradation into L-glutamate; N-formimidoyl-L-glutamate from L-histidine: step 3/3. Functionally, catalyzes the hydrolytic cleavage of the carbon-nitrogen bond in imidazolone-5-propanoate to yield N-formimidoyl-L-glutamate. It is the third step in the universal histidine degradation pathway. The polypeptide is Imidazolonepropionase (Cupriavidus pinatubonensis (strain JMP 134 / LMG 1197) (Cupriavidus necator (strain JMP 134))).